A 64-amino-acid polypeptide reads, in one-letter code: Small ribosomal subunit protein bS21 (64 aa).

Positions Glu39 to Phe64 are disordered. Basic residues predominate over residues Val43 to Phe64.

Belongs to the bacterial ribosomal protein bS21 family.

This chain is Small ribosomal subunit protein bS21 (rpsU), found in Myxococcus xanthus.